A 685-amino-acid polypeptide reads, in one-letter code: MTSSSYTDIDTLAINTIRTLAVDTTAHAKSGHPGAPMGLAPAAHVLFSRIMKFNPAHPKWLNRDRFILSNGHACVLQYIMCHLLGYKLTIEDLKQFRQVGSKTPGHPETHNPDLNIETGAGPLGQGIASAVGLAIGKAHSAAVYNKPGFDLFSNYTFCFLGDGCLQEGVSSEACSLAGHLKLSNLIAVWDNNKITIDGATSMSFDEDVEKRFEAYGWNIVRVANGDTDLDGIEKGFREAMSCTDKPTLINLKTTIGYGSELQGTHSVHGSPLKPEDCVHVKKLFGFDPTKTFQVPPEVYAYYKERVAIASSAEEEYKKMYASYKQSYPDLSNQLERILSRKFPEGWEKHLPVYKPGDKAVATRKLSEIVLDALCPVLPELVGGSADLTPSNLTRWEGAADFQPPSSKLGTYAGRYIRYGIREHGMAGIMNGLAVYGPIIPYGGTFLNFVSYAAGAVRMAALNNSRVIYVATHDSIGLGEDGPTHQPIETFAHFRAMPNINCWRPADGNETSAAYYSALTSDSTPSILALTRQNLPQLENSTIENALKGGYVMLENKEADITLVGTGSEVSLCIDTVKTLETEYNLKARVVSLPCWEVFEQQPESYRLSVIPDGIPAMSVEVWATNGWRRYVHEAFGMHTFGDSGPAPKLYEKFHFTTSGVAQRAKKTVDAYKDIPYIRSPVRRAF.

Residue His32 coordinates substrate. Thiamine diphosphate is bound by residues His72 and 121 to 123 (GPL). Asp162 is a binding site for Mg(2+). Thiamine diphosphate contacts are provided by Gly163 and Asn192. Residues Asn192 and Ile194 each contribute to the Mg(2+) site. Residues His268, Arg363, and Ser390 each contribute to the substrate site. His268 serves as a coordination point for thiamine diphosphate. Thiamine diphosphate is bound by residues Glu422 and Phe448. Glu422 (proton donor) is an active-site residue. Positions 472, 480, and 531 each coordinate substrate.

The protein belongs to the transketolase family. In terms of assembly, homodimer. Mg(2+) serves as cofactor. Requires Ca(2+) as cofactor. Mn(2+) is required as a cofactor. It depends on Co(2+) as a cofactor. The cofactor is thiamine diphosphate.

The catalysed reaction is D-sedoheptulose 7-phosphate + D-glyceraldehyde 3-phosphate = aldehydo-D-ribose 5-phosphate + D-xylulose 5-phosphate. In terms of biological role, catalyzes the transfer of a two-carbon ketol group from a ketose donor to an aldose acceptor, via a covalent intermediate with the cofactor thiamine pyrophosphate. The sequence is that of Probable transketolase from Schizosaccharomyces pombe (strain 972 / ATCC 24843) (Fission yeast).